The chain runs to 75 residues: Sec-independent protein translocase protein TatA (75 aa).

The chain crosses the membrane as a helical span at residues 1–21 (MGSFSIWHWLIVLVIIALVFG). The tract at residues 45-75 (DASADKPADQVTQQRVSDDTIDVQAKEKSNS) is disordered.

Belongs to the TatA/E family. In terms of assembly, the Tat system comprises two distinct complexes: a TatABC complex, containing multiple copies of TatA, TatB and TatC subunits, and a separate TatA complex, containing only TatA subunits. Substrates initially bind to the TatABC complex, which probably triggers association of the separate TatA complex to form the active translocon.

It is found in the cell inner membrane. Its function is as follows. Part of the twin-arginine translocation (Tat) system that transports large folded proteins containing a characteristic twin-arginine motif in their signal peptide across membranes. TatA could form the protein-conducting channel of the Tat system. The chain is Sec-independent protein translocase protein TatA from Bordetella bronchiseptica (strain ATCC BAA-588 / NCTC 13252 / RB50) (Alcaligenes bronchisepticus).